The following is a 907-amino-acid chain: Protein translocase subunit SecA (907 aa).

ATP contacts are provided by residues Q87, 105–109, and D512; that span reads GEGKT. The disordered stretch occupies residues 834–907; the sequence is QEDVERMEEQ…KKYKQCHGKI (74 aa). 2 stretches are compositionally biased toward basic and acidic residues: residues 836–853 and 873–888; these read DVER…EAAR and EEAH…KVGR. Positions 892, 894, 903, and 904 each coordinate Zn(2+). Residues 898–907 show a composition bias toward basic residues; it reads KKYKQCHGKI.

Belongs to the SecA family. As to quaternary structure, monomer and homodimer. Part of the essential Sec protein translocation apparatus which comprises SecA, SecYEG and auxiliary proteins SecDF-YajC and YidC. Requires Zn(2+) as cofactor.

The protein resides in the cell inner membrane. Its subcellular location is the cytoplasm. It catalyses the reaction ATP + H2O + cellular proteinSide 1 = ADP + phosphate + cellular proteinSide 2.. Its function is as follows. Part of the Sec protein translocase complex. Interacts with the SecYEG preprotein conducting channel. Has a central role in coupling the hydrolysis of ATP to the transfer of proteins into and across the cell membrane, serving both as a receptor for the preprotein-SecB complex and as an ATP-driven molecular motor driving the stepwise translocation of polypeptide chains across the membrane. The polypeptide is Protein translocase subunit SecA (Aliivibrio fischeri (strain MJ11) (Vibrio fischeri)).